The chain runs to 121 residues: Large ribosomal subunit protein eL18 (121 aa).

The protein belongs to the eukaryotic ribosomal protein eL18 family.

The polypeptide is Large ribosomal subunit protein eL18 (Methanosphaerula palustris (strain ATCC BAA-1556 / DSM 19958 / E1-9c)).